We begin with the raw amino-acid sequence, 371 residues long: Dual-specificity RNA methyltransferase RlmN (371 aa).

Glutamate 86 functions as the Proton acceptor in the catalytic mechanism. One can recognise a Radical SAM core domain in the interval 105–338 (RHARYTICVS…CTIRQSKGLD (234 aa)). A disulfide bridge links cysteine 112 with cysteine 343. [4Fe-4S] cluster contacts are provided by cysteine 119, cysteine 123, and cysteine 126. Residues 169 to 170 (GE), serine 201, 224 to 226 (SLH), and asparagine 300 each bind S-adenosyl-L-methionine. The S-methylcysteine intermediate role is filled by cysteine 343. The segment covering 348–363 (QRSQNLSPSNNNTSKP) has biased composition (polar residues). A disordered region spans residues 348–371 (QRSQNLSPSNNNTSKPSDIKKSES).

The protein belongs to the radical SAM superfamily. RlmN family. It depends on [4Fe-4S] cluster as a cofactor.

The protein localises to the cytoplasm. The enzyme catalyses adenosine(2503) in 23S rRNA + 2 reduced [2Fe-2S]-[ferredoxin] + 2 S-adenosyl-L-methionine = 2-methyladenosine(2503) in 23S rRNA + 5'-deoxyadenosine + L-methionine + 2 oxidized [2Fe-2S]-[ferredoxin] + S-adenosyl-L-homocysteine. It catalyses the reaction adenosine(37) in tRNA + 2 reduced [2Fe-2S]-[ferredoxin] + 2 S-adenosyl-L-methionine = 2-methyladenosine(37) in tRNA + 5'-deoxyadenosine + L-methionine + 2 oxidized [2Fe-2S]-[ferredoxin] + S-adenosyl-L-homocysteine. Specifically methylates position 2 of adenine 2503 in 23S rRNA and position 2 of adenine 37 in tRNAs. m2A2503 modification seems to play a crucial role in the proofreading step occurring at the peptidyl transferase center and thus would serve to optimize ribosomal fidelity. The sequence is that of Dual-specificity RNA methyltransferase RlmN from Campylobacter curvus (strain 525.92).